An 820-amino-acid chain; its full sequence is Phenylalanine--tRNA ligase beta subunit (820 aa).

The tRNA-binding domain occupies 39–150 (PAPVGGVLLV…GTAAPGTPLR (112 aa)). Residues 435–510 (EVPQTITTTG…RLHGFTELPE (76 aa)) enclose the B5 domain. Mg(2+) contacts are provided by D488, D494, E497, and E498. In terms of domain architecture, FDX-ACB spans 727 to 818 (SRAPAAWRDL…AVKARGWAIR (92 aa)).

It belongs to the phenylalanyl-tRNA synthetase beta subunit family. Type 1 subfamily. Tetramer of two alpha and two beta subunits. The cofactor is Mg(2+).

The protein localises to the cytoplasm. It carries out the reaction tRNA(Phe) + L-phenylalanine + ATP = L-phenylalanyl-tRNA(Phe) + AMP + diphosphate + H(+). The sequence is that of Phenylalanine--tRNA ligase beta subunit (pheT) from Deinococcus radiodurans (strain ATCC 13939 / DSM 20539 / JCM 16871 / CCUG 27074 / LMG 4051 / NBRC 15346 / NCIMB 9279 / VKM B-1422 / R1).